Here is a 423-residue protein sequence, read N- to C-terminus: COP9 signalosome complex subunit 3 (423 aa).

The 169-residue stretch at Asn197 to Glu365 folds into the PCI domain. Residues Pro401–Ser410 are compositionally biased toward polar residues. Residues Pro401 to Ser423 are disordered.

This sequence belongs to the CSN3 family. As to quaternary structure, component of the CSN complex, probably composed of cops1, cops2, cops3, cops4, cops5, cops6, cops7, cops8 and cops9.

The protein resides in the cytoplasm. It is found in the nucleus. In terms of biological role, component of the COP9 signalosome complex (CSN), a complex involved in various cellular and developmental processes. The CSN complex is an essential regulator of the ubiquitin (Ubl) conjugation pathway by mediating the deneddylation of the cullin subunits of E3 ligase complexes, leading to modify the Ubl ligase activity. This is COP9 signalosome complex subunit 3 (cops3) from Xenopus laevis (African clawed frog).